The chain runs to 227 residues: Heptaprenylglyceryl phosphate synthase (227 aa).

Residue Lys-13 participates in sn-glycerol 1-phosphate binding. Residues Asp-15 and Thr-41 each coordinate Mg(2+). Sn-glycerol 1-phosphate-binding positions include 159–164, Gly-189, and 209–210; these read YLEYSG and GN.

The protein belongs to the GGGP/HepGP synthase family. Group I subfamily. Homodimer. Mg(2+) is required as a cofactor.

It catalyses the reaction sn-glycerol 1-phosphate + all-trans-heptaprenyl diphosphate = 3-heptaprenyl-sn-glycero-1-phosphate + diphosphate. The protein operates within membrane lipid metabolism; glycerophospholipid metabolism. Its function is as follows. Prenyltransferase that catalyzes in vivo the transfer of the heptaprenyl moiety of heptaprenyl pyrophosphate (HepPP; 35 carbon atoms) to the C3 hydroxyl of sn-glycerol-1-phosphate (G1P), producing heptaprenylglyceryl phosphate (HepGP). This reaction is an ether-bond-formation step in the biosynthesis of archaea-type G1P-based membrane lipids found in Bacillales. The polypeptide is Heptaprenylglyceryl phosphate synthase (Exiguobacterium sibiricum (strain DSM 17290 / CCUG 55495 / CIP 109462 / JCM 13490 / 255-15)).